A 411-amino-acid polypeptide reads, in one-letter code: Protein Brevis radix-like 2 (411 aa).

2 disordered regions span residues 10–31 (KDGG…KSLT) and 103–149 (AAPS…DDDE). Positions 20 to 31 (ATATPNSGKSLT) are enriched in polar residues. Positions 136 to 149 (GEEDYDDDDDDDDE) are enriched in acidic residues. In terms of domain architecture, BRX 1 spans 161-217 (REWTAQVEPGVQITFVSIPGGAGNDLKRIRFSREMFNKWEAQRWWGENYDRVVELYN). Disordered regions lie at residues 245–294 (SRVG…VAAA) and 324–346 (AGPA…ASVS). Residues 276–294 (SRTASSKAQLSSSSSVAAA) show a composition bias toward low complexity. In terms of domain architecture, BRX 2 spans 356–411 (TEWVEQDEPGVSITIREFGDGTRELRRVRFSRERFGEERAKVWWEQNRDRIHAQYL).

Belongs to the BRX family.

The protein resides in the nucleus. This chain is Protein Brevis radix-like 2 (BRXL2), found in Oryza sativa subsp. japonica (Rice).